Consider the following 341-residue polypeptide: RNA 3'-terminal phosphate cyclase (341 aa).

ATP is bound by residues Q100 and 283–287 (FLGDQ). H307 serves as the catalytic Tele-AMP-histidine intermediate.

It belongs to the RNA 3'-terminal cyclase family. Type 1 subfamily.

Its subcellular location is the cytoplasm. It catalyses the reaction a 3'-end 3'-phospho-ribonucleotide-RNA + ATP = a 3'-end 2',3'-cyclophospho-ribonucleotide-RNA + AMP + diphosphate. Its function is as follows. Catalyzes the conversion of 3'-phosphate to a 2',3'-cyclic phosphodiester at the end of RNA. The mechanism of action of the enzyme occurs in 3 steps: (A) adenylation of the enzyme by ATP; (B) transfer of adenylate to an RNA-N3'P to produce RNA-N3'PP5'A; (C) and attack of the adjacent 2'-hydroxyl on the 3'-phosphorus in the diester linkage to produce the cyclic end product. The biological role of this enzyme is unknown but it is likely to function in some aspects of cellular RNA processing. The chain is RNA 3'-terminal phosphate cyclase (rtcA) from Pyrococcus horikoshii (strain ATCC 700860 / DSM 12428 / JCM 9974 / NBRC 100139 / OT-3).